The following is a 41-amino-acid chain: Large ribosomal subunit protein bL36 (41 aa).

This sequence belongs to the bacterial ribosomal protein bL36 family.

This is Large ribosomal subunit protein bL36 from Rhizobium etli (strain CIAT 652).